Reading from the N-terminus, the 949-residue chain is MKTDLLACRHIGVNKADAEVMLRKIGVASLDELIDKTIPANIRLKAPLALPAPMTEYEFARHIAELAGKNKLFTTYIGMGWYNTITPAVIQRNVFENPVWYTSYTPYQTEVSQGRLEALMNFQTAVCDLTAMPLANCSLLDEATAAAEAVTMMYGLRSRNQQKAGANVVFIDENIFPQTLAVITTRAIPQDIEIRTGKFRDLEFTDDLFACVLQYPNANGNAEDYREFTEKAHTANCKVAVAADILSLALLTPPGEWGADIVFGTTQRLGTPMFYGGPSAGYFATRDEYKRNMPGRIIGWSKDKYGKLCYRMALQTREQHIKREKATSNICTAQALLATMAGFYTVYHGQEGIRNIASRIHSITVFLEKSISKLGFKQVNKQYFDTLRFILPDSVSAQQIRTIALSKEVNLRYFDNGDVGLSIDETTDVAAANILLSIFAIAAGKDFQKVDDIPEATIISEELKRQTPYLTHEVFSKYHTETEMMRYIKRLDRKDISLAQSMISLGSCTMKLNAAAEMLPLSCAEFMCMHPLVPEDQAAGYRELIHNLSEELKVITGFAGVSLQPNSGAAGEYAGLRTIRAYLESIGQGHRNKVLIPASAHGTNPASAIQAGFTTVTCACDEHGNVDMDDLRAKAEENKDDLAALMITYPSTHGIFETEIVEICQIIHACGAQVYMDGANMNAQVGLTNPGFIGADVCHLNLHKTFASPHGGGGPGVGPICVAEHLVPFLPGHGLFGNSQNEVSAAPFGSAGILPITYGYIRMMGAEGLTMATKTAILNANYLAACLKDTYGIVYRGANGFVGHEMILECRKVYEETGISENDIAKRLMDYGYHAPTLSFPVHGTLMIEPTESESLSELDNFVLTMLTIWNEIQEVKNGEADKEDNVLINAPHPEYEVVSDQWEHCYTREKAAYPIESVRENKFWVNVARVDNTLGDRKLLPTCYGCFD.

Lysine 704 bears the N6-(pyridoxal phosphate)lysine mark.

This sequence belongs to the GcvP family. As to quaternary structure, the glycine cleavage system is composed of four proteins: P, T, L and H. Pyridoxal 5'-phosphate is required as a cofactor.

It carries out the reaction N(6)-[(R)-lipoyl]-L-lysyl-[glycine-cleavage complex H protein] + glycine + H(+) = N(6)-[(R)-S(8)-aminomethyldihydrolipoyl]-L-lysyl-[glycine-cleavage complex H protein] + CO2. In terms of biological role, the glycine cleavage system catalyzes the degradation of glycine. The P protein binds the alpha-amino group of glycine through its pyridoxal phosphate cofactor; CO(2) is released and the remaining methylamine moiety is then transferred to the lipoamide cofactor of the H protein. This chain is Glycine dehydrogenase (decarboxylating), found in Bacteroides fragilis (strain YCH46).